Here is an 87-residue protein sequence, read N- to C-terminus: MTMTSEEVITLIDEEGVEHDFTVLDILEVDGTEYAILIPVDDEEQEDEVVIFKFTEDDEGNEILVEIEDDEWEKVADAWQEKVGREH.

This sequence belongs to the UPF0473 family.

The sequence is that of UPF0473 protein Daud_0916 from Desulforudis audaxviator (strain MP104C).